We begin with the raw amino-acid sequence, 179 residues long: Large ribosomal subunit protein uL10 (179 aa).

It belongs to the universal ribosomal protein uL10 family. In terms of assembly, part of the ribosomal stalk of the 50S ribosomal subunit. The N-terminus interacts with L11 and the large rRNA to form the base of the stalk. The C-terminus forms an elongated spine to which L12 dimers bind in a sequential fashion forming a multimeric L10(L12)X complex.

Its function is as follows. Forms part of the ribosomal stalk, playing a central role in the interaction of the ribosome with GTP-bound translation factors. This Mycolicibacterium vanbaalenii (strain DSM 7251 / JCM 13017 / BCRC 16820 / KCTC 9966 / NRRL B-24157 / PYR-1) (Mycobacterium vanbaalenii) protein is Large ribosomal subunit protein uL10.